Consider the following 887-residue polypeptide: Alanine--tRNA ligase (887 aa).

Residues His-565, His-569, Cys-674, and His-678 each contribute to the Zn(2+) site.

Belongs to the class-II aminoacyl-tRNA synthetase family. Requires Zn(2+) as cofactor.

It is found in the cytoplasm. It catalyses the reaction tRNA(Ala) + L-alanine + ATP = L-alanyl-tRNA(Ala) + AMP + diphosphate. Catalyzes the attachment of alanine to tRNA(Ala) in a two-step reaction: alanine is first activated by ATP to form Ala-AMP and then transferred to the acceptor end of tRNA(Ala). Also edits incorrectly charged Ser-tRNA(Ala) and Gly-tRNA(Ala) via its editing domain. The sequence is that of Alanine--tRNA ligase from Erythrobacter litoralis (strain HTCC2594).